A 333-amino-acid chain; its full sequence is Gap junction alpha-4 protein (333 aa).

Residues 1 to 20 (MGDWGFLEKLLDQVQEHSTV) lie on the Cytoplasmic side of the membrane. A helical transmembrane segment spans residues 21–40 (VGKIWLTVLFIFRILILGLA). Over 41–76 (GESVWGDEQSDFECNTAQPGCTNVCYDQAFPISHIR) the chain is Extracellular. A helical membrane pass occupies residues 77 to 99 (YWVLQFLFVSTPTLVYLGHVIYL). Residues 100-148 (SRREERLRQKEGELRALPAKDPRVERALASIERQMAKISVAEDGHLRIR) are Cytoplasmic-facing. Residues 149–165 (GALMGTYVASVLCKSVL) traverse the membrane as a helical segment. The Extracellular segment spans residues 166–207 (EAGFLYGQWRLYGWTMEPVFVCQRSPCPYLVDCFVSRPTEKT). Residues 208–230 (IFIIFMLVVGLISLVLNLLELAY) form a helical membrane-spanning segment. Residues 231-333 (LLCRCLSRGV…SSSASKKQYV (103 aa)) are Cytoplasmic-facing. Positions 303 to 333 (SRAPLFLDPPPQTGRKSPSRPSSSASKKQYV) are disordered. Residues 317-333 (RKSPSRPSSSASKKQYV) are compositionally biased toward low complexity.

The protein belongs to the connexin family. Alpha-type (group II) subfamily. A connexon is composed of a hexamer of connexins.

It is found in the cell membrane. Its subcellular location is the cell junction. The protein resides in the gap junction. One gap junction consists of a cluster of closely packed pairs of transmembrane channels, the connexons, through which materials of low MW diffuse from one cell to a neighboring cell. The sequence is that of Gap junction alpha-4 protein (GJA4) from Bos taurus (Bovine).